Reading from the N-terminus, the 119-residue chain is Immunoglobulin heavy variable 3-15 (119 aa).

Positions 1–19 (MEFGLSWIFLAAILKGVQC) are cleaved as a signal peptide. The interval 20-44 (EVQLVESGGGLVKPGGSLRLSCAAS) is framework-1. One can recognise an Ig-like domain in the interval 20–119 (EVQLVESGGG…EDTAVYYCTT (100 aa)). Cysteine 41 and cysteine 117 form a disulfide bridge. The tract at residues 45–52 (GFTFSNAW) is complementarity-determining-1. A framework-2 region spans residues 53–69 (MSWVRQAPGKGLEWVGR). Positions 70–79 (IKSKTDGGTT) are complementarity-determining-2. Positions 80-117 (DYAAPVKGRFTISRDDSKNTLYLQMNSLKTEDTAVYYC) are framework-3. The interval 118–119 (TT) is complementarity-determining-3.

In terms of assembly, immunoglobulins are composed of two identical heavy chains and two identical light chains; disulfide-linked.

It is found in the secreted. It localises to the cell membrane. In terms of biological role, v region of the variable domain of immunoglobulin heavy chains that participates in the antigen recognition. Immunoglobulins, also known as antibodies, are membrane-bound or secreted glycoproteins produced by B lymphocytes. In the recognition phase of humoral immunity, the membrane-bound immunoglobulins serve as receptors which, upon binding of a specific antigen, trigger the clonal expansion and differentiation of B lymphocytes into immunoglobulins-secreting plasma cells. Secreted immunoglobulins mediate the effector phase of humoral immunity, which results in the elimination of bound antigens. The antigen binding site is formed by the variable domain of one heavy chain, together with that of its associated light chain. Thus, each immunoglobulin has two antigen binding sites with remarkable affinity for a particular antigen. The variable domains are assembled by a process called V-(D)-J rearrangement and can then be subjected to somatic hypermutations which, after exposure to antigen and selection, allow affinity maturation for a particular antigen. The sequence is that of Immunoglobulin heavy variable 3-15 from Homo sapiens (Human).